The primary structure comprises 488 residues: (S)-N-methylcoclaurine 3'-hydroxylase isozyme 2 (488 aa).

The helical transmembrane segment at V3–S23 threads the bilayer. C430 is a binding site for heme.

The protein belongs to the cytochrome P450 family. It depends on heme as a cofactor.

Its subcellular location is the endoplasmic reticulum membrane. It localises to the microsome membrane. It catalyses the reaction (S)-N-methylcoclaurine + reduced [NADPH--hemoprotein reductase] + O2 = (S)-3'-hydroxy-N-methylcoclaurine + oxidized [NADPH--hemoprotein reductase] + H2O + H(+). It participates in alkaloid biosynthesis; (S)-reticuline biosynthesis; (S)-reticuline from (S)-norcoclaurine: step 3/4. 3'-hydroxylation of (S)-N-methylcoclaurine. The sequence is that of (S)-N-methylcoclaurine 3'-hydroxylase isozyme 2 (CYP80B2) from Eschscholzia californica (California poppy).